The following is a 398-amino-acid chain: 1-deoxy-D-xylulose 5-phosphate reductoisomerase (398 aa).

NADPH is bound by residues T10, G11, S12, I13, and N124. Residue K125 coordinates 1-deoxy-D-xylulose 5-phosphate. Residue E126 participates in NADPH binding. D150 contributes to the Mn(2+) binding site. 1-deoxy-D-xylulose 5-phosphate contacts are provided by S151, E152, S186, and H209. E152 lines the Mn(2+) pocket. G215 serves as a coordination point for NADPH. 1-deoxy-D-xylulose 5-phosphate is bound by residues S222, N227, K228, and E231. Mn(2+) is bound at residue E231.

It belongs to the DXR family. The cofactor is Mg(2+). Mn(2+) serves as cofactor.

It carries out the reaction 2-C-methyl-D-erythritol 4-phosphate + NADP(+) = 1-deoxy-D-xylulose 5-phosphate + NADPH + H(+). It functions in the pathway isoprenoid biosynthesis; isopentenyl diphosphate biosynthesis via DXP pathway; isopentenyl diphosphate from 1-deoxy-D-xylulose 5-phosphate: step 1/6. Catalyzes the NADPH-dependent rearrangement and reduction of 1-deoxy-D-xylulose-5-phosphate (DXP) to 2-C-methyl-D-erythritol 4-phosphate (MEP). The protein is 1-deoxy-D-xylulose 5-phosphate reductoisomerase of Tolumonas auensis (strain DSM 9187 / NBRC 110442 / TA 4).